A 437-amino-acid polypeptide reads, in one-letter code: tRNA-2-methylthio-N(6)-dimethylallyladenosine synthase (437 aa).

The 115-residue stretch at 1–115 (MKVYIETMGC…ISQVIHKEKA (115 aa)) folds into the MTTase N-terminal domain. The [4Fe-4S] cluster site is built by Cys-10, Cys-46, Cys-78, Cys-148, Cys-152, and Cys-155. One can recognise a Radical SAM core domain in the interval 134–367 (KKAQIRSLLN…QNRHKEILEE (234 aa)). One can recognise a TRAM domain in the interval 370 to 436 (KLEVGKTHVV…KGRLIATAKG (67 aa)).

It belongs to the methylthiotransferase family. MiaB subfamily. Monomer. It depends on [4Fe-4S] cluster as a cofactor.

It localises to the cytoplasm. The catalysed reaction is N(6)-dimethylallyladenosine(37) in tRNA + (sulfur carrier)-SH + AH2 + 2 S-adenosyl-L-methionine = 2-methylsulfanyl-N(6)-dimethylallyladenosine(37) in tRNA + (sulfur carrier)-H + 5'-deoxyadenosine + L-methionine + A + S-adenosyl-L-homocysteine + 2 H(+). Its function is as follows. Catalyzes the methylthiolation of N6-(dimethylallyl)adenosine (i(6)A), leading to the formation of 2-methylthio-N6-(dimethylallyl)adenosine (ms(2)i(6)A) at position 37 in tRNAs that read codons beginning with uridine. This chain is tRNA-2-methylthio-N(6)-dimethylallyladenosine synthase, found in Helicobacter pylori (strain Shi470).